The sequence spans 322 residues: Ferredoxin--NADP reductase (322 aa).

FAD contacts are provided by Asp-34, Gln-42, Tyr-47, Val-87, Phe-120, Asp-279, and Thr-320.

The protein belongs to the ferredoxin--NADP reductase type 2 family. As to quaternary structure, homodimer. The cofactor is FAD.

It carries out the reaction 2 reduced [2Fe-2S]-[ferredoxin] + NADP(+) + H(+) = 2 oxidized [2Fe-2S]-[ferredoxin] + NADPH. The chain is Ferredoxin--NADP reductase from Streptococcus pneumoniae serotype 2 (strain D39 / NCTC 7466).